The primary structure comprises 876 residues: ATP-dependent helicase Lhr-Core (876 aa).

7 residues coordinate ATP: Gln37, Lys60, Thr61, Asp175, Glu176, Arg374, and His377. A Helicase ATP-binding domain is found at 41-232; sequence IPLIKKGKNV…FLVGGNGDYE (192 aa). The DEAH box signature appears at 175-178; that stretch reads DEIH. Residues 249–421 enclose the Helicase C-terminal domain; the sequence is PVKDLVHATE…NIHVPENPLD (173 aa). The interval 422-506 is WH domain; sequence VLTQLIVAAS…IFFLNSGTIP (85 aa). A domain 4 region spans residues 507-876; that stretch reads DEAMIPVKME…DLEYTEAGIK (370 aa).

It belongs to the Lhr helicase family. Lhr-Core subfamily. As to quaternary structure, monomer.

It catalyses the reaction Couples ATP hydrolysis with the unwinding of duplex DNA by translocating in the 3'-5' direction.. The catalysed reaction is ATP + H2O = ADP + phosphate + H(+). In terms of biological role, probably part of a 4-gene DNA damage response locus in which the upstream ups system, in combination with this downstream locus, functions in homologous recombination to rescue Sulfolobales from DNA-damaging threats. DNA helicase that translocates in a 3'-5' direction on single-stranded (ss)DNA. Binds Holliday junction (HJ) DNA, Y-shaped DNA, DNA with a 3'-overhang and single-stranded (ss)DNA with high affinity; binds double-stranded (ds)DNA with less affinity. Has helicase activity on DNA with a 3'-overhang, Y-shaped DNA and HJ DNA. Does not unwind blunt-ended dsDNA or DNA with a 5'-overhang. This is ATP-dependent helicase Lhr-Core from Sulfolobus acidocaldarius (strain ATCC 33909 / DSM 639 / JCM 8929 / NBRC 15157 / NCIMB 11770).